Here is an 877-residue protein sequence, read N- to C-terminus: DNA polymerase I (877 aa).

The 5'-3' exonuclease domain maps to 180–270; the sequence is TPAQFIDLKA…EIGLDDTLLK (91 aa). The 161-residue stretch at 308–468 folds into the 3'-5' exonuclease domain; that stretch reads DEIDFEIVTD…AKEKMMAELL (161 aa).

This sequence belongs to the DNA polymerase type-A family. Single-chain monomer with multiple functions.

It catalyses the reaction DNA(n) + a 2'-deoxyribonucleoside 5'-triphosphate = DNA(n+1) + diphosphate. In addition to polymerase activity, this DNA polymerase exhibits 3'-5' and 5'-3' exonuclease activity. The polypeptide is DNA polymerase I (polA) (Lactococcus lactis subsp. lactis (strain IL1403) (Streptococcus lactis)).